A 1460-amino-acid chain; its full sequence is DNA-directed RNA polymerase III subunit RPC1 (1460 aa).

7 residues coordinate Zn(2+): Cys-67, Cys-70, Cys-77, His-80, Cys-107, Cys-110, and Cys-154. Residues Asp-511, Asp-513, and Asp-515 each coordinate Mg(2+). Positions 858-870 (PPEFLFHAISGRE) are bridging helix.

This sequence belongs to the RNA polymerase beta' chain family. In terms of assembly, component of the RNA polymerase III (Pol III) complex consisting of 17 subunits.

Its subcellular location is the nucleus. It catalyses the reaction RNA(n) + a ribonucleoside 5'-triphosphate = RNA(n+1) + diphosphate. Its function is as follows. DNA-dependent RNA polymerase catalyzes the transcription of DNA into RNA using the four ribonucleoside triphosphates as substrates. Largest and catalytic core component of RNA polymerase III which synthesizes small RNAs, such as 5S rRNA and tRNAs. Forms the polymerase active center together with the second largest subunit. A single-stranded DNA template strand of the promoter is positioned within the central active site cleft of Pol III. A bridging helix emanates from RPC1 and crosses the cleft near the catalytic site and is thought to promote translocation of Pol III by acting as a ratchet that moves the RNA-DNA hybrid through the active site by switching from straight to bent conformations at each step of nucleotide addition. In Saccharomyces cerevisiae (strain ATCC 204508 / S288c) (Baker's yeast), this protein is DNA-directed RNA polymerase III subunit RPC1 (RPO31).